Here is a 597-residue protein sequence, read N- to C-terminus: Sodium/mannose cotransporter SLC5A10 (597 aa).

At 1-16 the chain is on the extracellular side; that stretch reads MVADNSTSDPHAPGPQ. Asn5 carries N-linked (GlcNAc...) asparagine glycosylation. A helical membrane pass occupies residues 17–37; that stretch reads LSVTDIVVITVYFALNVAVGI. The Cytoplasmic segment spans residues 38–73; it reads WSSCRASRNTVSGYFLAGRDMTWWPIGASLFGSSEG. The residue at position 49 (Ser49) is a Phosphoserine. The chain crosses the membrane as a helical span at residues 74 to 94; that stretch reads SGLFIGLAGSGAAGGLAVAGF. Over 95 to 100 the chain is Extracellular; sequence DWNATY. Residues 101 to 121 traverse the membrane as a helical segment; it reads VLLALAWVFGAIYISSEIVTL. Over 122 to 137 the chain is Cytoplasmic; that stretch reads AEYIQKRFGGQRIRMY. Residues 138 to 158 traverse the membrane as a helical segment; the sequence is LSVLSLLLSVFTKISLDLYAG. At 159–171 the chain is on the extracellular side; it reads ALFVHICLGWNFY. Residues 172 to 194 traverse the membrane as a helical segment; sequence LSTILTLTITALYTITGGLVAVI. At 195–200 the chain is on the cytoplasmic side; the sequence is YTDALQ. The chain crosses the membrane as a helical span at residues 201-219; it reads TLIMVVGAVILAIKAFHQI. The Extracellular portion of the chain corresponds to 220 to 265; the sequence is DGYGQMEAAYARAIPSRTVANTTCHLPRADAMHMFRDPYTGDLPWT. A helical membrane pass occupies residues 266 to 286; the sequence is GMTFGLTIMATWYWCTDQVIV. Topologically, residues 287 to 301 are cytoplasmic; it reads QRSLSARNLNHAKAG. The chain crosses the membrane as a helical span at residues 302–322; the sequence is SILASYLKMLPMGLMIMPGMI. Topologically, residues 323–367 are extracellular; sequence SRALFPDEVGCVVPSECLRACGAEIGCSNIAYPKLVMELMPVGLR. The helical transmembrane segment at 368–390 threads the bilayer; it reads GLMIAVMMPALMSSLSSIFNSSS. Residues 391 to 410 are Cytoplasmic-facing; that stretch reads TLFTMDIWRRLRPCASEREL. The helical transmembrane segment at 411–431 threads the bilayer; the sequence is LLVGRLVIVVLIGVSVAWIPV. Residues 432–444 lie on the Extracellular side of the membrane; sequence LQGSNGGQLFIYM. A helical transmembrane segment spans residues 445-465; sequence QSVTSSLAPPVTAVFTLGIFW. At 466–472 the chain is on the cytoplasmic side; the sequence is QRANEQG. Residues 473-493 form a helical membrane-spanning segment; it reads AFWGLLAGLAVGATRLVLEFL. Topologically, residues 494 to 514 are extracellular; the sequence is HPAPPCGAADTRPAVLSQLHY. The chain crosses the membrane as a helical span at residues 515–535; that stretch reads LHFAVALFVLTGAVAVGGSLL. At 536 to 576 the chain is on the cytoplasmic side; that stretch reads TPPPRRHQIENLTWWTLTRDLSLGAKAGDGQTPQRYTFWAR. Residues 577 to 597 traverse the membrane as a helical segment; that stretch reads VCGFNAILLMCVNIFFYAYFA.

Belongs to the sodium:solute symporter (SSF) (TC 2.A.21) family. Expressed only in kidney.

It localises to the apical cell membrane. It carries out the reaction D-mannose(out) + Na(+)(out) = D-mannose(in) + Na(+)(in). The enzyme catalyses D-fructopyranose(out) + Na(+)(out) = D-fructopyranose(in) + Na(+)(in). In terms of biological role, electrogenic Na+-coupled sugar symporter that actively transports D-mannose or D-fructose at the plasma membrane, with a Na+ to sugar coupling ratio of 1:1. Transporter activity is driven by a transmembrane Na+ electrochemical gradient set by the Na+/K+ pump. Exclusively recognizes sugar substrates having a pyranose ring with an axial hydroxyl group on carbon 2. Has likely evolved to enable renal reabsorption of D-mannose, an important constituent of oligosaccharide chains of glycoproteins. Contributes to dietary D-fructose reabsorption from glomerular filtrate across the brush border of the kidney. The chain is Sodium/mannose cotransporter SLC5A10 (SLC5A10) from Oryctolagus cuniculus (Rabbit).